Consider the following 456-residue polypeptide: Gamma-glutamyl phosphate reductase (456 aa).

This sequence belongs to the gamma-glutamyl phosphate reductase family.

The protein localises to the cytoplasm. The catalysed reaction is L-glutamate 5-semialdehyde + phosphate + NADP(+) = L-glutamyl 5-phosphate + NADPH + H(+). The protein operates within amino-acid biosynthesis; L-proline biosynthesis; L-glutamate 5-semialdehyde from L-glutamate: step 2/2. Catalyzes the NADPH-dependent reduction of L-glutamate 5-phosphate into L-glutamate 5-semialdehyde and phosphate. The product spontaneously undergoes cyclization to form 1-pyrroline-5-carboxylate. The protein is Gamma-glutamyl phosphate reductase of Haloquadratum walsbyi (strain DSM 16790 / HBSQ001).